The sequence spans 307 residues: 4-hydroxy-3-methylbut-2-enyl diphosphate reductase (307 aa).

[4Fe-4S] cluster is bound at residue Cys-13. 2 residues coordinate (2E)-4-hydroxy-3-methylbut-2-enyl diphosphate: His-42 and His-75. Residues His-42 and His-75 each coordinate dimethylallyl diphosphate. 2 residues coordinate isopentenyl diphosphate: His-42 and His-75. [4Fe-4S] cluster is bound at residue Cys-97. A (2E)-4-hydroxy-3-methylbut-2-enyl diphosphate-binding site is contributed by His-125. Dimethylallyl diphosphate is bound at residue His-125. Position 125 (His-125) interacts with isopentenyl diphosphate. Glu-127 serves as the catalytic Proton donor. Thr-165 is a (2E)-4-hydroxy-3-methylbut-2-enyl diphosphate binding site. Residue Cys-195 participates in [4Fe-4S] cluster binding. The (2E)-4-hydroxy-3-methylbut-2-enyl diphosphate site is built by Ser-223, Ser-224, Asn-225, and Ser-267. Positions 223, 224, 225, and 267 each coordinate dimethylallyl diphosphate. Ser-223, Ser-224, Asn-225, and Ser-267 together coordinate isopentenyl diphosphate.

This sequence belongs to the IspH family. Requires [4Fe-4S] cluster as cofactor.

The enzyme catalyses isopentenyl diphosphate + 2 oxidized [2Fe-2S]-[ferredoxin] + H2O = (2E)-4-hydroxy-3-methylbut-2-enyl diphosphate + 2 reduced [2Fe-2S]-[ferredoxin] + 2 H(+). The catalysed reaction is dimethylallyl diphosphate + 2 oxidized [2Fe-2S]-[ferredoxin] + H2O = (2E)-4-hydroxy-3-methylbut-2-enyl diphosphate + 2 reduced [2Fe-2S]-[ferredoxin] + 2 H(+). It participates in isoprenoid biosynthesis; dimethylallyl diphosphate biosynthesis; dimethylallyl diphosphate from (2E)-4-hydroxy-3-methylbutenyl diphosphate: step 1/1. Its pathway is isoprenoid biosynthesis; isopentenyl diphosphate biosynthesis via DXP pathway; isopentenyl diphosphate from 1-deoxy-D-xylulose 5-phosphate: step 6/6. Its function is as follows. Catalyzes the conversion of 1-hydroxy-2-methyl-2-(E)-butenyl 4-diphosphate (HMBPP) into a mixture of isopentenyl diphosphate (IPP) and dimethylallyl diphosphate (DMAPP). Acts in the terminal step of the DOXP/MEP pathway for isoprenoid precursor biosynthesis. The polypeptide is 4-hydroxy-3-methylbut-2-enyl diphosphate reductase (Chlamydia trachomatis serovar D (strain ATCC VR-885 / DSM 19411 / UW-3/Cx)).